A 103-amino-acid chain; its full sequence is Co-chaperonin GroES (103 aa).

The protein belongs to the GroES chaperonin family. In terms of assembly, heptamer of 7 subunits arranged in a ring. Interacts with the chaperonin GroEL.

The protein resides in the cytoplasm. In terms of biological role, together with the chaperonin GroEL, plays an essential role in assisting protein folding. The GroEL-GroES system forms a nano-cage that allows encapsulation of the non-native substrate proteins and provides a physical environment optimized to promote and accelerate protein folding. GroES binds to the apical surface of the GroEL ring, thereby capping the opening of the GroEL channel. This chain is Co-chaperonin GroES, found in Thermosynechococcus vestitus (strain NIES-2133 / IAM M-273 / BP-1).